The chain runs to 358 residues: MDKDKKGAKQDLSEILQFVAPGTPLREGIENVLRAKTGGLIVVGFNDKVKEVVDGGFHINSSFSPAHLYELAKMDGAIILSDSGQKILYANTQLMPEATIPSSETGMRHRTAERVAKQTGCLIIAISERRNVITLYQENMKYILKDIGFILTKANQAIQTLEKYKLILDHAISNLNALEFEELVTFGDVISVLHRYEMVLRIKNEINMYIKELGTEGHLIRLQVSELITDMEQEAALFVKDYVKEKIKDPFVLLKQLQDMSSFELLDDAILLKLLGYSATTNMEEYVFPRGYRLLHKIPRLPMPIVENVVEAFGHLKLIIEADVKDLDEVEGIGAVRAQKIKKGLKRLQEKHYTDRQL.

Positions 9–147 (KQDLSEILQF…ENMKYILKDI (139 aa)) constitute a DAC domain. ATP contacts are provided by residues Gly76, Leu94, and 107–111 (MRHRT).

This sequence belongs to the DisA family. As to quaternary structure, homooctamer. Mg(2+) is required as a cofactor.

The enzyme catalyses 2 ATP = 3',3'-c-di-AMP + 2 diphosphate. Its function is as follows. Participates in a DNA-damage check-point that is active prior to asymmetric division when DNA is damaged. DisA forms globular foci that rapidly scan along the chromosomes during sporulation, searching for lesions. When a lesion is present, DisA pauses at the lesion site. This triggers a cellular response that culminates in a temporary block in sporulation initiation. In terms of biological role, also has diadenylate cyclase activity, catalyzing the condensation of 2 ATP molecules into cyclic di-AMP (c-di-AMP). c-di-AMP acts as a signaling molecule that couples DNA integrity with progression of sporulation. The rise in c-di-AMP level generated by DisA while scanning the chromosome, operates as a positive signal that advances sporulation; upon encountering a lesion, the DisA focus arrests at the damaged site and halts c-di-AMP synthesis. This Bacillus licheniformis (strain ATCC 14580 / DSM 13 / JCM 2505 / CCUG 7422 / NBRC 12200 / NCIMB 9375 / NCTC 10341 / NRRL NRS-1264 / Gibson 46) protein is DNA integrity scanning protein DisA.